The sequence spans 326 residues: Putative HTH-type transcriptional regulator y4qH (326 aa).

An HTH luxR-type domain is found at 257-322; it reads AVQKIPALSL…VAAIKAISLG (66 aa). Positions 281–300 form a DNA-binding region, H-T-H motif; sequence SWDIGVIMRISENTVNFHIK.

This sequence belongs to the autoinducer-regulated transcriptional regulatory protein family.

This Sinorhizobium fredii (strain NBRC 101917 / NGR234) protein is Putative HTH-type transcriptional regulator y4qH.